Here is a 252-residue protein sequence, read N- to C-terminus: 2-succinyl-6-hydroxy-2,4-cyclohexadiene-1-carboxylate synthase (252 aa).

The protein belongs to the AB hydrolase superfamily. MenH family. In terms of assembly, monomer.

It carries out the reaction 5-enolpyruvoyl-6-hydroxy-2-succinyl-cyclohex-3-ene-1-carboxylate = (1R,6R)-6-hydroxy-2-succinyl-cyclohexa-2,4-diene-1-carboxylate + pyruvate. The protein operates within quinol/quinone metabolism; 1,4-dihydroxy-2-naphthoate biosynthesis; 1,4-dihydroxy-2-naphthoate from chorismate: step 3/7. Its pathway is quinol/quinone metabolism; menaquinone biosynthesis. Functionally, catalyzes a proton abstraction reaction that results in 2,5-elimination of pyruvate from 2-succinyl-5-enolpyruvyl-6-hydroxy-3-cyclohexene-1-carboxylate (SEPHCHC) and the formation of 2-succinyl-6-hydroxy-2,4-cyclohexadiene-1-carboxylate (SHCHC). The chain is 2-succinyl-6-hydroxy-2,4-cyclohexadiene-1-carboxylate synthase from Klebsiella pneumoniae subsp. pneumoniae (strain ATCC 700721 / MGH 78578).